The following is a 125-amino-acid chain: Monothiol glutaredoxin-S2 (125 aa).

Residues 28 to 124 form the Glutaredoxin domain; sequence AERVGRLVRE…PRLREVGALC (97 aa). Cysteine 48 is a [2Fe-2S] cluster binding site.

It belongs to the glutaredoxin family. CC-type subfamily.

The protein resides in the cytoplasm. In terms of biological role, may only reduce GSH-thiol disulfides, but not protein disulfides. The protein is Monothiol glutaredoxin-S2 (GRXS2) of Oryza sativa subsp. japonica (Rice).